The chain runs to 368 residues: Galanin receptor type 3 (368 aa).

The Extracellular segment spans residues 1-20; sequence MADAQNISLDSPGSVGAVAV. N-linked (GlcNAc...) asparagine glycosylation is present at asparagine 6. A helical membrane pass occupies residues 21–41; sequence PVVFALIFLLGTVGNGLVLAV. The Cytoplasmic segment spans residues 42-57; that stretch reads LLQPGPSAWQEPGSTT. A helical transmembrane segment spans residues 58–78; it reads DLFILNLAVADLCFILCCVPF. The Extracellular segment spans residues 79-96; the sequence is QATIYTLDAWLFGALVCK. Cysteines 95 and 172 form a disulfide. A helical membrane pass occupies residues 97–118; the sequence is AVHLLIYLTMYASSFTLAAVSV. At 119-138 the chain is on the cytoplasmic side; the sequence is DRYLAVRHPLRSRALRTPRN. Residues 139–159 form a helical membrane-spanning segment; it reads ARAAVGLVWLLAALFSAPYLS. Residues 160-184 lie on the Extracellular side of the membrane; it reads YYGTVRYGALELCVPAWEDARRRAL. The helical transmembrane segment at 185-205 threads the bilayer; the sequence is DVATFAAGYLLPVAVVSLAYG. Residues 206–236 are Cytoplasmic-facing; the sequence is RTLRFLWAAVGPAGAAAAEARRRATGRAGRA. A helical transmembrane segment spans residues 237–257; it reads MLAVAALYALCWGPHHALILC. The Extracellular segment spans residues 258–259; the sequence is FW. The chain crosses the membrane as a helical span at residues 260-280; sequence YGRFAFSPATYACRLASHCLA. At 281–368 the chain is on the cytoplasmic side; the sequence is YANSCLNPLV…HGGEAARGPE (88 aa). Cysteine 308 carries the S-palmitoyl cysteine lipid modification. The segment at 317–368 is disordered; it reads RRALRRVRPASSGPPGCPGDARPSGRLLAGGGQGPEPREGPVHGGEAARGPE.

Belongs to the G-protein coupled receptor 1 family.

It localises to the cell membrane. Its function is as follows. Receptor for the hormone galanin. Receptor for the hormone spexin-1. The protein is Galanin receptor type 3 (GALR3) of Homo sapiens (Human).